The sequence spans 122 residues: Large ribosomal subunit protein uL14 (122 aa).

This sequence belongs to the universal ribosomal protein uL14 family. In terms of assembly, part of the 50S ribosomal subunit. Forms a cluster with proteins L3 and L19. In the 70S ribosome, L14 and L19 interact and together make contacts with the 16S rRNA in bridges B5 and B8.

Its function is as follows. Binds to 23S rRNA. Forms part of two intersubunit bridges in the 70S ribosome. This chain is Large ribosomal subunit protein uL14, found in Anaeromyxobacter sp. (strain Fw109-5).